We begin with the raw amino-acid sequence, 115 residues long: Inner membrane protein YidH (115 aa).

At 1 to 30 (MKISRLGEAPDYRFSLANERTFLAWIRTAL) the chain is on the cytoplasmic side. A helical transmembrane segment spans residues 31–51 (GFLAAGVGLDQLAPDFATPVI). Topologically, residues 52 to 53 (RE) are periplasmic. Residues 54-74 (LLALLLCLFSGGLAMYGYLRW) traverse the membrane as a helical segment. Over 75–92 (LRNEKAMRLKEDLPYTNS) the chain is Cytoplasmic. A helical transmembrane segment spans residues 93-113 (LLIISLILMVVAVIVMGLVLY). The Periplasmic portion of the chain corresponds to 114–115 (AG).

The protein to M.tuberculosis Rv2272.

It localises to the cell inner membrane. The protein is Inner membrane protein YidH (yidH) of Escherichia coli O157:H7.